The primary structure comprises 85 residues: Colicin E3 immunity protein (85 aa).

Belongs to the cloacin immunity protein family. As to quaternary structure, native colicin E3 is a 1:1 complex of A chain and protein B (Im3). Binds between the translocation and cytotoxic RNase domains of intact ColE3, blocking access to the 16S rRNA substrate. Forms a very tight 1:1 complex with the cytotoxic fragment (residues 456-551) of ColE3 (ceaC).

Functionally, the cognate immunity protein for colicin E3 (ColE3), protects cells which harbor the plasmid ColE3 against the toxic action of ColE3. This protein inhibits the 16S RNA hydrolyzing activity of ColE3 by binding with very high affinity to the C-terminal catalytic domain of ColE3. The chain is Colicin E3 immunity protein from Escherichia coli.